A 125-amino-acid polypeptide reads, in one-letter code: Ribonuclease pancreatic (125 aa).

Lys7 and Arg10 together coordinate substrate. The active-site Proton acceptor is the His12. 4 disulfide bridges follow: Cys27–Cys85, Cys41–Cys96, Cys59–Cys111, and Cys66–Cys73. Residue Asn35 is glycosylated (N-linked (GlcNAc...) asparagine). Residues 42-46 (KPVNT), Lys67, and Arg86 contribute to the substrate site. The active-site Proton donor is the His120.

Belongs to the pancreatic ribonuclease family. In terms of assembly, monomer. Interacts with and forms tight 1:1 complexes with RNH1. Dimerization of two such complexes may occur. Interaction with RNH1 inhibits this protein. As to expression, pancreas.

Its subcellular location is the secreted. It carries out the reaction an [RNA] containing cytidine + H2O = an [RNA]-3'-cytidine-3'-phosphate + a 5'-hydroxy-ribonucleotide-3'-[RNA].. It catalyses the reaction an [RNA] containing uridine + H2O = an [RNA]-3'-uridine-3'-phosphate + a 5'-hydroxy-ribonucleotide-3'-[RNA].. Endonuclease that catalyzes the cleavage of RNA on the 3' side of pyrimidine nucleotides. Acts on single-stranded and double-stranded RNA. The polypeptide is Ribonuclease pancreatic (RNASE1) (Spalax ehrenbergi (Middle East blind mole rat)).